A 431-amino-acid polypeptide reads, in one-letter code: Dual-specificity RNA methyltransferase RlmN (431 aa).

The tract at residues 1 to 26 is disordered; the sequence is MATASLDTARPERRAGSDPFIEKTPE. A compositionally biased stretch (basic and acidic residues) spans 9 to 26; the sequence is ARPERRAGSDPFIEKTPE. The Proton acceptor role is filled by Glu-138. Positions 144–394 constitute a Radical SAM core domain; that stretch reads ANDRGTLCVS…VRTPRGRDIL (251 aa). A disulfide bridge connects residues Cys-151 and Cys-397. [4Fe-4S] cluster contacts are provided by Cys-158, Cys-162, and Cys-165. S-adenosyl-L-methionine is bound by residues 223–224, Ser-255, 277–279, and Asn-354; these read GE and SLH. Cys-397 (S-methylcysteine intermediate) is an active-site residue.

Belongs to the radical SAM superfamily. RlmN family. [4Fe-4S] cluster is required as a cofactor.

The protein resides in the cytoplasm. The catalysed reaction is adenosine(2503) in 23S rRNA + 2 reduced [2Fe-2S]-[ferredoxin] + 2 S-adenosyl-L-methionine = 2-methyladenosine(2503) in 23S rRNA + 5'-deoxyadenosine + L-methionine + 2 oxidized [2Fe-2S]-[ferredoxin] + S-adenosyl-L-homocysteine. It catalyses the reaction adenosine(37) in tRNA + 2 reduced [2Fe-2S]-[ferredoxin] + 2 S-adenosyl-L-methionine = 2-methyladenosine(37) in tRNA + 5'-deoxyadenosine + L-methionine + 2 oxidized [2Fe-2S]-[ferredoxin] + S-adenosyl-L-homocysteine. In terms of biological role, specifically methylates position 2 of adenine 2503 in 23S rRNA and position 2 of adenine 37 in tRNAs. m2A2503 modification seems to play a crucial role in the proofreading step occurring at the peptidyl transferase center and thus would serve to optimize ribosomal fidelity. This chain is Dual-specificity RNA methyltransferase RlmN, found in Methylobacterium sp. (strain 4-46).